Reading from the N-terminus, the 219-residue chain is Protein GrpE (219 aa).

Disordered stretches follow at residues 1–32 (MSTTDNTNGDDRRPGQPEWDDEENNFEHLDAT) and 59–87 (FDGVDASTEDPGATVGETSTLESELAERT).

Belongs to the GrpE family. As to quaternary structure, homodimer.

Its subcellular location is the cytoplasm. Its function is as follows. Participates actively in the response to hyperosmotic and heat shock by preventing the aggregation of stress-denatured proteins, in association with DnaK and GrpE. It is the nucleotide exchange factor for DnaK and may function as a thermosensor. Unfolded proteins bind initially to DnaJ; upon interaction with the DnaJ-bound protein, DnaK hydrolyzes its bound ATP, resulting in the formation of a stable complex. GrpE releases ADP from DnaK; ATP binding to DnaK triggers the release of the substrate protein, thus completing the reaction cycle. Several rounds of ATP-dependent interactions between DnaJ, DnaK and GrpE are required for fully efficient folding. In Corynebacterium diphtheriae (strain ATCC 700971 / NCTC 13129 / Biotype gravis), this protein is Protein GrpE.